The following is a 220-amino-acid chain: Mediator of RNA polymerase II transcription subunit 7 (220 aa).

It belongs to the Mediator complex subunit 7 family. Component of the Mediator complex. Interacts with MED21.

It is found in the nucleus. In terms of biological role, component of the Mediator complex, a coactivator involved in the regulated transcription of nearly all RNA polymerase II-dependent genes. Mediator functions as a bridge to convey information from gene-specific regulatory proteins to the basal RNA polymerase II transcription machinery. Mediator is recruited to promoters by direct interactions with regulatory proteins and serves as a scaffold for the assembly of a functional preinitiation complex with RNA polymerase II and the general transcription factors. Required for activated transcription of the MtnA, MtnB and MtnD genes. This Drosophila melanogaster (Fruit fly) protein is Mediator of RNA polymerase II transcription subunit 7 (MED7).